We begin with the raw amino-acid sequence, 334 residues long: uncharacterized protein (334 aa).

Belongs to the ADP-ribosylglycohydrolase family.

This is an uncharacterized protein from Escherichia coli (strain K12).